Reading from the N-terminus, the 367-residue chain is Ribosome-binding ATPase YchF (367 aa).

The region spanning 2–258 (LSAGIVGLPN…LKLEQRQYFL (257 aa)) is the OBG-type G domain. 11–16 (NVGKST) is an ATP binding site. Mg(2+)-binding residues include Ser15 and Thr35. Residues 281-364 (NLWSFFTFGK…KDGDVCNFKF (84 aa)) enclose the TGS domain.

Belongs to the TRAFAC class OBG-HflX-like GTPase superfamily. OBG GTPase family. YchF/OLA1 subfamily. Requires Mg(2+) as cofactor.

Its function is as follows. ATPase that binds to both the 70S ribosome and the 50S ribosomal subunit in a nucleotide-independent manner. The sequence is that of Ribosome-binding ATPase YchF from Mycoplasma genitalium (strain ATCC 33530 / DSM 19775 / NCTC 10195 / G37) (Mycoplasmoides genitalium).